An 89-amino-acid chain; its full sequence is Small ribosomal subunit protein uS15 (89 aa).

This sequence belongs to the universal ribosomal protein uS15 family. As to quaternary structure, part of the 30S ribosomal subunit. Forms a bridge to the 50S subunit in the 70S ribosome, contacting the 23S rRNA.

In terms of biological role, one of the primary rRNA binding proteins, it binds directly to 16S rRNA where it helps nucleate assembly of the platform of the 30S subunit by binding and bridging several RNA helices of the 16S rRNA. Its function is as follows. Forms an intersubunit bridge (bridge B4) with the 23S rRNA of the 50S subunit in the ribosome. In Saccharopolyspora erythraea (strain ATCC 11635 / DSM 40517 / JCM 4748 / NBRC 13426 / NCIMB 8594 / NRRL 2338), this protein is Small ribosomal subunit protein uS15.